Here is a 445-residue protein sequence, read N- to C-terminus: MTERLTNLWPAPLAAQPLNATVTVPGSKSLSNRYLILAALGSKPVTLIGLLRSRDTDLMMGALEALGVRCDVDSATDTTVTVTPPVSGRFHGNVNVFCGLAGTVMRFVPGLALFADGPVNFDGDEQAYARPMKPVLDGLEQLGATVDYHGEVGRLPFTITPPATLPAAQAQVSIDSSGSSQFISGLLLISSKLPGGLHLAHTGEKTPSLPHIRMTVADVTGAGGAVEADESARTWTVEPRAMQLSSKVTVEPDLSNAAPFLGAALIAGGTVRVPHWPETTTQPGGLLPGYLEQMGAEVSFPTIGGVRYCEVTGDGTVRGLGTFDLTAAGEIAPSLAAILVFADKSTDMVGIGHLRGHETNRLEALVNEIRRVGGAAEELPDGLRIEPVPAETLHGAVMETYADHRMATFAAMLGLRIPDIEVINVATTRKTLPDFVGMWSGMLRQ.

3-phosphoshikimate-binding residues include Lys-28, Ser-29, and Arg-33. Phosphoenolpyruvate is bound at residue Lys-28. Residues Gly-102 and Arg-130 each contribute to the phosphoenolpyruvate site. 3-phosphoshikimate is bound by residues Ser-179, Ser-180, Gln-181, Glu-330, and His-357. Gln-181 provides a ligand contact to phosphoenolpyruvate. Glu-330 functions as the Proton acceptor in the catalytic mechanism. Positions 361, 405, and 430 each coordinate phosphoenolpyruvate.

It belongs to the EPSP synthase family. As to quaternary structure, monomer.

Its subcellular location is the cytoplasm. It carries out the reaction 3-phosphoshikimate + phosphoenolpyruvate = 5-O-(1-carboxyvinyl)-3-phosphoshikimate + phosphate. Its pathway is metabolic intermediate biosynthesis; chorismate biosynthesis; chorismate from D-erythrose 4-phosphate and phosphoenolpyruvate: step 6/7. Catalyzes the transfer of the enolpyruvyl moiety of phosphoenolpyruvate (PEP) to the 5-hydroxyl of shikimate-3-phosphate (S3P) to produce enolpyruvyl shikimate-3-phosphate and inorganic phosphate. The sequence is that of 3-phosphoshikimate 1-carboxyvinyltransferase from Bifidobacterium longum (strain DJO10A).